Consider the following 396-residue polypeptide: 8-amino-7-oxononanoate synthase (396 aa).

Arginine 19 lines the substrate pocket. 106–107 (GY) serves as a coordination point for pyridoxal 5'-phosphate. Residue histidine 131 coordinates substrate. Positions 176, 204, and 233 each coordinate pyridoxal 5'-phosphate. Lysine 236 is modified (N6-(pyridoxal phosphate)lysine). Residue threonine 350 coordinates substrate.

This sequence belongs to the class-II pyridoxal-phosphate-dependent aminotransferase family. BioF subfamily. As to quaternary structure, homodimer. Requires pyridoxal 5'-phosphate as cofactor.

The catalysed reaction is 6-carboxyhexanoyl-[ACP] + L-alanine + H(+) = (8S)-8-amino-7-oxononanoate + holo-[ACP] + CO2. Its pathway is cofactor biosynthesis; biotin biosynthesis. Catalyzes the decarboxylative condensation of pimeloyl-[acyl-carrier protein] and L-alanine to produce 8-amino-7-oxononanoate (AON), [acyl-carrier protein], and carbon dioxide. The polypeptide is 8-amino-7-oxononanoate synthase (Pseudomonas savastanoi pv. phaseolicola (strain 1448A / Race 6) (Pseudomonas syringae pv. phaseolicola (strain 1448A / Race 6))).